The following is a 584-amino-acid chain: Proline--tRNA ligase (584 aa).

This sequence belongs to the class-II aminoacyl-tRNA synthetase family. ProS type 1 subfamily. As to quaternary structure, homodimer.

The protein resides in the cytoplasm. It carries out the reaction tRNA(Pro) + L-proline + ATP = L-prolyl-tRNA(Pro) + AMP + diphosphate. Functionally, catalyzes the attachment of proline to tRNA(Pro) in a two-step reaction: proline is first activated by ATP to form Pro-AMP and then transferred to the acceptor end of tRNA(Pro). As ProRS can inadvertently accommodate and process non-cognate amino acids such as alanine and cysteine, to avoid such errors it has two additional distinct editing activities against alanine. One activity is designated as 'pretransfer' editing and involves the tRNA(Pro)-independent hydrolysis of activated Ala-AMP. The other activity is designated 'posttransfer' editing and involves deacylation of mischarged Ala-tRNA(Pro). The misacylated Cys-tRNA(Pro) is not edited by ProRS. This Mycobacterium sp. (strain KMS) protein is Proline--tRNA ligase.